The sequence spans 543 residues: Excitatory amino acid transporter 1 (543 aa).

At 1-47 (MTKSNGEDPRAGSRMERFQQGVRQRTLLAKKKVQNITKDDVKGFLKR) the chain is on the cytoplasmic side. Residues 48–68 (NGFVLFTVIAVVVGSILGFSV) form a helical membrane-spanning segment. Topologically, residues 69–86 (RSYHMTFRELKYFSFPGE) are extracellular. A helical membrane pass occupies residues 87–108 (LLMRMLQMLVLPLIVSSLVTGM). The Cytoplasmic segment spans residues 109-122 (AALDSKASGKMGLR). A helical transmembrane segment spans residues 123–145 (AVVYYMTTTVIAVFIGIVIVIIV). Over 146–237 (HPGKGTKEHM…MREEMIPVPG (92 aa)) the chain is Extracellular. N-linked (GlcNAc...) asparagine glycans are attached at residues Asn-206 and Asn-217. A helical transmembrane segment spans residues 238-261 (AVNGVNALGLVVFSMCFGLVIGNM). The Cytoplasmic portion of the chain corresponds to 262-270 (KEQGKALKD). The helical transmembrane segment at 271–298 (FFDSLNEAIMRLVAVIMWYAPIGILFLI) threads the bilayer. Residues 299 to 319 (AGKIAEMEDMGVVGGQLGMYT) lie on the Extracellular side of the membrane. A helical membrane pass occupies residues 320-341 (VTVIIGLLIHAVIVLPLLYFAV). At 342–346 (TRKNP) the chain is on the cytoplasmic side. The segment at residues 347–377 (WVFIGGILQALITALGTSSSSATLPITFKCL) is an intramembrane region (discontinuously helical). 364–366 (SSS) provides a ligand contact to L-aspartate. The Cytoplasmic segment spans residues 378-386 (EENNKVDKR). The helical transmembrane segment at 387 to 413 (VTRFVLPVGATINMDGTALYEALAAIF) threads the bilayer. Na(+)-binding residues include Gly-395, Thr-397, and Asn-399. Thr-403 lines the L-aspartate pocket. Over 414 to 426 (IAQVNNYDLNFGQ) the chain is Extracellular. The discontinuously helical intramembrane region spans 427–460 (ILTISITATAASIGAAGIPQAGLVTMVIVLTSVG). 444–448 (IPQAG) is an L-aspartate binding site. Residues 461–473 (LPTDDITLIIAVD) are Extracellular-facing. A helical transmembrane segment spans residues 474-495 (WFLDRLRTTTNVLGDSLGAGIV). L-aspartate contacts are provided by Asp-477 and Asn-484. Na(+) is bound by residues Asn-484 and Asp-488. Residues 496–543 (EHLSRHELQSGDAEMGNSVIEENEMKKPYQLVSQENELEKPIDSETKM) lie on the Cytoplasmic side of the membrane. Positions 521 to 543 (KKPYQLVSQENELEKPIDSETKM) are disordered. Positions 532–543 (ELEKPIDSETKM) are enriched in basic and acidic residues.

This sequence belongs to the dicarboxylate/amino acid:cation symporter (DAACS) (TC 2.A.23) family. Homotrimer. In terms of tissue distribution, detected in retina (at protein level).

It localises to the cell membrane. It catalyses the reaction K(+)(in) + L-glutamate(out) + 3 Na(+)(out) + H(+)(out) = K(+)(out) + L-glutamate(in) + 3 Na(+)(in) + H(+)(in). It carries out the reaction K(+)(in) + L-aspartate(out) + 3 Na(+)(out) + H(+)(out) = K(+)(out) + L-aspartate(in) + 3 Na(+)(in) + H(+)(in). The enzyme catalyses D-aspartate(out) + K(+)(in) + 3 Na(+)(out) + H(+)(out) = D-aspartate(in) + K(+)(out) + 3 Na(+)(in) + H(+)(in). Its function is as follows. Sodium-dependent, high-affinity amino acid transporter that mediates the uptake of L-glutamate and also L-aspartate and D-aspartate. Functions as a symporter that transports one amino acid molecule together with two or three Na(+) ions and one proton, in parallel with the counter-transport of one K(+) ion. Plays a redundant role in the rapid removal of released glutamate from the synaptic cleft, which is essential for terminating the postsynaptic action of glutamate. In Ambystoma tigrinum (Eastern tiger salamander), this protein is Excitatory amino acid transporter 1 (SLC1A3).